Reading from the N-terminus, the 188-residue chain is Ribosome maturation factor RimM (188 aa).

The PRC barrel domain occupies 98-171; sequence EGEFFQGDLV…RIVIHPPEYV (74 aa).

It belongs to the RimM family. In terms of assembly, binds ribosomal protein uS19.

The protein resides in the cytoplasm. In terms of biological role, an accessory protein needed during the final step in the assembly of 30S ribosomal subunit, possibly for assembly of the head region. Essential for efficient processing of 16S rRNA. May be needed both before and after RbfA during the maturation of 16S rRNA. It has affinity for free ribosomal 30S subunits but not for 70S ribosomes. This is Ribosome maturation factor RimM from Myxococcus xanthus (strain DK1622).